The following is a 411-amino-acid chain: MTFIEEFINKGYFHQCTDLERLTSITKESKIAAYIGFDCTATSLHIGSLMQIMILRLLQKHGHKPIVIIGGGTSKIGDPSGKDEARKTITKEDIARNAEGIKKSLSKFIKFGDGESDAIMLDNAEWLDSLYYLDFLRDFGSHFSVNRMLTMDSVKLRLEREQHLSFLEFNYMLLQAYDFYYLSKHYNCSLQLGGSDQWGNIVMGADLTRKISSKEVFGMTTPLLTTASGAKMGKTAAGAVWLNEDLLSPYDYYQYWRNCEDADIVRFAKLYSELTNEELVVFENLAAEDINAAKKQLAYELTKLCHGKQEAKNALETSVKIFEQGQIDENLTTIVLEPEMLQAGITAFELFHEAGLATSKSEARKLIRGKGAKVNDQLIEDENMVINTTFLLDNKVIKLSAGKKRHILVKI.

Position 34 (Tyr34) interacts with L-tyrosine. A 'HIGH' region motif is present at residues 39 to 48; the sequence is CTATSLHIGS. 2 residues coordinate L-tyrosine: Tyr171 and Gln175. Residues 231 to 235 carry the 'KMSKS' region motif; sequence KMGKT. Lys234 provides a ligand contact to ATP. Positions 345–411 constitute an S4 RNA-binding domain; it reads ITAFELFHEA…GKKRHILVKI (67 aa).

Belongs to the class-I aminoacyl-tRNA synthetase family. TyrS type 1 subfamily. As to quaternary structure, homodimer.

Its subcellular location is the cytoplasm. The enzyme catalyses tRNA(Tyr) + L-tyrosine + ATP = L-tyrosyl-tRNA(Tyr) + AMP + diphosphate + H(+). Its function is as follows. Catalyzes the attachment of tyrosine to tRNA(Tyr) in a two-step reaction: tyrosine is first activated by ATP to form Tyr-AMP and then transferred to the acceptor end of tRNA(Tyr). The polypeptide is Tyrosine--tRNA ligase (Rickettsia bellii (strain RML369-C)).